The sequence spans 532 residues: MISYEYCDSSDSFYFNDIQDFDFNPWIEVKSVSEKGRCVFSKKFIPKGTMVFRDIPYAAIVDNQFKRNICTTCFKILLESNRHNFQTCPSCFQVNYCSNYCKQYSKIETKHTELECKWIQDFTVSFKHQMAEDDRNIVLLVLKILARRIHEKQSTIFHNKPLTTNTFETCTSNNNNIDLLPMIPNDIPDLIDHLDDYFINSKNNNEFENEEEEEEEQEQKGEGEQEENENNENNEKVKKKVIIIDDNEKEKEEIKKFNKIWKNDFKRLINIAKVIQIIIDDSIDSLENIKCDYGFVDNQGDTEMVDNSIDPKGLDKLVDNLSSSDLNILRLLCKIRANYFGLWNSAYKPIPLNSIDDDDDDNNNNKEKPNNDYLWCGSGVYLKLSLFNHSCFPNCTTLIEYNINKKNSNNNNGNNGNNNSYGDTNQLTISIITLRDIEENQELLITYIPLNQKINDRVKSLKSNWLFQCDCKRCHFEKINENQTEKIYKDSCCTNQKCSGGLLIPLEQNSTQGICRVCKNTYTLPTVFYPLK.

In terms of domain architecture, SET spans 25-448; that stretch reads PWIEVKSVSE…ENQELLITYI (424 aa). The MYND-type; degenerate zinc-finger motif lies at 70–116; it reads CTTCFKILLESNRHNFQTCPSCFQVNYCSNYCKQYSKIETKHTELEC. The stretch at 199 to 240 forms a coiled coil; it reads INSKNNNEFENEEEEEEEQEQKGEGEQEENENNENNEKVKKK. The disordered stretch occupies residues 204-234; it reads NNEFENEEEEEEEQEQKGEGEQEENENNENN. The span at 207–217 shows a compositional bias: acidic residues; it reads FENEEEEEEEQ.

The protein belongs to the class V-like SAM-binding methyltransferase superfamily.

Probable methyltransferase. The sequence is that of SET and MYND domain-containing protein DDB_G0288495 from Dictyostelium discoideum (Social amoeba).